Consider the following 205-residue polypeptide: Beta-crystallin B2 (205 aa).

Ala2 is subject to N-acetylalanine. The interval 2–16 (ASDHQTQAGKPQPLN) is N-terminal arm. 2 consecutive Beta/gamma crystallin 'Greek key' domains span residues 17–56 (PKIIIFEQENFQGHSHELSGPCPNLKETGVEKAGSVLVQA) and 57–101 (GPWV…RPIK). The segment at 102 to 106 (VDSQE) is connecting peptide. Beta/gamma crystallin 'Greek key' domains are found at residues 107–148 (HKII…RVQS) and 149–191 (GTWV…RRIR). The tract at residues 193 to 205 (MQWHQRGAFHPSN) is C-terminal arm.

It belongs to the beta/gamma-crystallin family. In terms of assembly, homo/heterodimer, or complexes of higher-order. The structure of beta-crystallin oligomers seems to be stabilized through interactions between the N-terminal arms.

Its function is as follows. Crystallins are the dominant structural components of the vertebrate eye lens. The protein is Beta-crystallin B2 (CRYBB2) of Canis lupus familiaris (Dog).